Here is a 114-residue protein sequence, read N- to C-terminus: MNNKEKGDFGEKVAVNYLLSKGAKILEKNYRLKIGEIDIIAKMEDEIIFVEVKSRSNIKFGYPCESVSFKKRKKIIGVASYYIIKNNLNNTPIRFDVIEVYLLEKRINHIMNAF.

This sequence belongs to the UPF0102 family.

The sequence is that of UPF0102 protein CD630_12710 from Clostridioides difficile (strain 630) (Peptoclostridium difficile).